Here is a 69-residue protein sequence, read N- to C-terminus: MMKRLLIGMIRIYQRYISPLKRPSCRFYPTCSEYSIQAIQKYGVVKGCWKSLVRILKCHPFHPGGYDPV.

It belongs to the UPF0161 family.

The protein localises to the cell membrane. Functionally, could be involved in insertion of integral membrane proteins into the membrane. The sequence is that of Putative membrane protein insertion efficiency factor from Desulfitobacterium hafniense (strain Y51).